The sequence spans 315 residues: Heterodimeric geranylgeranyl pyrophosphate synthase small subunit 1, chloroplastic (315 aa).

Residues aspartate 124 and glycine 130 each coordinate Mg(2+). The dimethylallyl diphosphate site is built by lysine 228, glutamine 265, and lysine 280.

Belongs to the FPP/GGPP synthase family. In terms of assembly, part of a heterodimeric geranyl(geranyl)diphosphate synthase. Requires Mg(2+) as cofactor. In terms of tissue distribution, mainly expressed in trichomes, and, to a lower extent, in roots, leaves, flowers and stems.

Its subcellular location is the plastid. It localises to the chloroplast thylakoid membrane. The protein localises to the chloroplast. Functionally, heterodimeric geranyl(geranyl)-diphosphate (GPP) synthase small subunit. The small subunit alone is inactive in vitro while the large subunit GGPPS1 catalyzes mainly the production of geranygeranyl-diphosphate in vitro. Upon association of the two subunits, the product profile changes and the production of gerany-diphosphate is strongly increased. The polypeptide is Heterodimeric geranylgeranyl pyrophosphate synthase small subunit 1, chloroplastic (Cannabis sativa (Hemp)).